The chain runs to 64 residues: Beta-insect excitatory toxin OdTx12 (64 aa).

An LCN-type CS-alpha/beta domain is found at Gln-1–Asp-59. Cystine bridges form between Cys-10–Cys-31, Cys-16–Cys-36, Cys-20–Cys-38, and Cys-32–Cys-58.

This sequence belongs to the long (4 C-C) scorpion toxin superfamily. Sodium channel inhibitor family. Beta subfamily. As to expression, expressed by the venom gland.

Its subcellular location is the secreted. Its function is as follows. Excitatory insect beta-toxins induce a spastic paralysis. They bind voltage-independently at site-4 of sodium channels (Nav) and shift the voltage of activation toward more negative potentials thereby affecting sodium channel activation and promoting spontaneous and repetitive firing. In vivo, this recombinant protein is lethal to Locusta migratoria larvae after injection, but has no significant effect when orally administered. Is not toxic to mice after intracerebroventricular injection. The sequence is that of Beta-insect excitatory toxin OdTx12 from Odontobuthus doriae (Yellow Iranian scorpion).